The primary structure comprises 327 residues: tRNA dimethylallyltransferase (327 aa).

ATP is bound at residue 14-21 (GPTASGKT). 16 to 21 (TASGKT) serves as a coordination point for substrate. Interaction with substrate tRNA regions lie at residues 39-42 (DSAL) and 163-167 (QRIQR).

Belongs to the IPP transferase family. Monomer. The cofactor is Mg(2+).

The catalysed reaction is adenosine(37) in tRNA + dimethylallyl diphosphate = N(6)-dimethylallyladenosine(37) in tRNA + diphosphate. Its function is as follows. Catalyzes the transfer of a dimethylallyl group onto the adenine at position 37 in tRNAs that read codons beginning with uridine, leading to the formation of N6-(dimethylallyl)adenosine (i(6)A). This chain is tRNA dimethylallyltransferase, found in Xanthomonas axonopodis pv. citri (strain 306).